The sequence spans 340 residues: Diacylglycerol acyltransferase/mycolyltransferase Ag85C (340 aa).

Residues 1-45 (MTFFEQVRRLRSAATTLPRRLAIAAMGAVLVYGLVGTFGGPATAG) form the signal peptide. 86–87 (LR) is a binding site for substrate. Residues 102-112 (FEEYYQSGLSV) are fibronectin-binding. Substrate-binding residues include Ser-170 and Asn-198. Ser-170 acts as the Nucleophile in catalysis. Glu-274 is a catalytic residue. Residues 276–279 (LTLR) and 306–308 (HSW) each bind substrate. Residue His-306 is part of the active site.

It belongs to the mycobacterial A85 antigen family. In terms of assembly, homodimer.

Its subcellular location is the secreted. The catalysed reaction is an acyl-CoA + a 1,2-diacyl-sn-glycerol = a triacyl-sn-glycerol + CoA. The enzyme catalyses 2 alpha,alpha'-trehalose 6-mycolate = alpha,alpha'-trehalose 6,6'-bismycolate + alpha,alpha-trehalose. In terms of biological role, the antigen 85 proteins (FbpA, FbpB, FbpC) are responsible for the high affinity of mycobacteria to fibronectin, a large adhesive glycoprotein, which facilitates the attachment of M.tuberculosis to murine alveolar macrophages (AMs). They also help to maintain the integrity of the cell wall by catalyzing the transfer of mycolic acids to cell wall arabinogalactan and through the synthesis of alpha,alpha-trehalose dimycolate (TDM, cord factor). They catalyze the transfer of a mycoloyl residue from one molecule of alpha,alpha-trehalose monomycolate (TMM) to another TMM, leading to the formation of TDM. This Mycobacterium bovis (strain ATCC BAA-935 / AF2122/97) protein is Diacylglycerol acyltransferase/mycolyltransferase Ag85C (fbpC).